We begin with the raw amino-acid sequence, 219 residues long: Ribose-5-phosphate isomerase A (219 aa).

Substrate contacts are provided by residues 28 to 31 (TGST), 81 to 84 (DGAD), and 94 to 97 (KGGG). Catalysis depends on glutamate 103, which acts as the Proton acceptor. Lysine 121 is a substrate binding site.

Belongs to the ribose 5-phosphate isomerase family. As to quaternary structure, homodimer.

It carries out the reaction aldehydo-D-ribose 5-phosphate = D-ribulose 5-phosphate. Its pathway is carbohydrate degradation; pentose phosphate pathway; D-ribose 5-phosphate from D-ribulose 5-phosphate (non-oxidative stage): step 1/1. Catalyzes the reversible conversion of ribose-5-phosphate to ribulose 5-phosphate. This is Ribose-5-phosphate isomerase A from Salmonella choleraesuis (strain SC-B67).